We begin with the raw amino-acid sequence, 341 residues long: Very-long-chain 3-oxoacyl-CoA reductase (341 aa).

The chain crosses the membrane as a helical span at residues 22–42; sequence AIYGFLLAGVAAFAAPIVSTI. Positions 67, 123, 131, 150, 217, 221, 250, and 252 each coordinate NADP(+). Y217 (proton donor) is an active-site residue. K221 (lowers pKa of active site Tyr) is an active-site residue.

This sequence belongs to the short-chain dehydrogenases/reductases (SDR) family.

It localises to the endoplasmic reticulum membrane. It carries out the reaction a very-long-chain (3R)-3-hydroxyacyl-CoA + NADP(+) = a very-long-chain 3-oxoacyl-CoA + NADPH + H(+). It participates in lipid metabolism; fatty acid biosynthesis. Its function is as follows. Component of the microsomal membrane bound fatty acid elongation system, which produces the 26-carbon very long-chain fatty acids (VLCFA) from palmitate. Catalyzes the reduction of the 3-ketoacyl-CoA intermediate that is formed in each cycle of fatty acid elongation. VLCFAs serve as precursors for ceramide and sphingolipids. This Phaeosphaeria nodorum (strain SN15 / ATCC MYA-4574 / FGSC 10173) (Glume blotch fungus) protein is Very-long-chain 3-oxoacyl-CoA reductase.